Consider the following 331-residue polypeptide: RNA 3'-terminal phosphate cyclase (331 aa).

ATP contacts are provided by residues Q100 and H276–Q280. Residue H301 is the Tele-AMP-histidine intermediate of the active site.

It belongs to the RNA 3'-terminal cyclase family. Type 1 subfamily.

The protein resides in the cytoplasm. It carries out the reaction a 3'-end 3'-phospho-ribonucleotide-RNA + ATP = a 3'-end 2',3'-cyclophospho-ribonucleotide-RNA + AMP + diphosphate. In terms of biological role, catalyzes the conversion of 3'-phosphate to a 2',3'-cyclic phosphodiester at the end of RNA. The mechanism of action of the enzyme occurs in 3 steps: (A) adenylation of the enzyme by ATP; (B) transfer of adenylate to an RNA-N3'P to produce RNA-N3'PP5'A; (C) and attack of the adjacent 2'-hydroxyl on the 3'-phosphorus in the diester linkage to produce the cyclic end product. The biological role of this enzyme is unknown but it is likely to function in some aspects of cellular RNA processing. The polypeptide is RNA 3'-terminal phosphate cyclase (Methanococcoides burtonii (strain DSM 6242 / NBRC 107633 / OCM 468 / ACE-M)).